The sequence spans 649 residues: Probable cyclic nucleotide-gated ion channel 12 (649 aa).

At 1-43 the chain is on the cytoplasmic side; sequence MNHRRSKFARIDSMGVDGKLKSVRGRLKKVYGKMKTLENWRKT. A helical transmembrane segment spans residues 44 to 64; that stretch reads VLLACVVALAIDPLFLFIPLI. Over 65-76 the chain is Extracellular; sequence DSQRFCFTFDKT. A helical membrane pass occupies residues 77 to 97; it reads LVAVVCVIRTFIDTFYVIHII. Over 98–128 the chain is Cytoplasmic; it reads YYLITETIAPRSQASLRGEIVVHSKATLKTR. A helical membrane pass occupies residues 129–149; that stretch reads LLFHFIVDIISVLPIPQVVVL. The Extracellular segment spans residues 150 to 162; sequence TLIPLSASLVSER. A helical transmembrane segment spans residues 163–183; it reads ILKWIILSQYVPRIIRMYPLY. The Cytoplasmic portion of the chain corresponds to 184-200; that stretch reads KEVTRAFGTVAESKWAG. Residues 201 to 221 form a helical membrane-spanning segment; the sequence is AALNLFLYMLHSYVFGAFWYL. The Extracellular portion of the chain corresponds to 222–329; that stretch reads SSIERKSKCW…QNLETSNSAG (108 aa). Residues 330–350 form a helical membrane-spanning segment; that stretch reads EIFFAIIICVSGLLLFAVLIG. Residues 351–649 are Cytoplasmic-facing; the sequence is NVQKYLQSST…ADLEFAKAEA (299 aa). A nucleoside 3',5'-cyclic phosphate is bound by residues 436–559 and Glu507; that span reads LNIM…TFRL. The interval 545–560 is calmodulin-binding; that stretch reads LNVFQRQKLQRTFRLY. Residues 565–594 form the IQ domain; it reads RSWAAFFIQAAWRKHCKRKLSKTRDNENIP. Residues 618–649 form a disordered region; it reads RRKDTADCSSSPDMSPPVPHKPADLEFAKAEA. The span at 638 to 649 shows a compositional bias: basic and acidic residues; the sequence is KPADLEFAKAEA.

It belongs to the cyclic nucleotide-gated cation channel (TC 1.A.1.5) family. As to quaternary structure, homotetramer or heterotetramer.

It localises to the cell membrane. Probable cyclic nucleotide-gated ion channel. The sequence is that of Probable cyclic nucleotide-gated ion channel 12 (CNGC12) from Arabidopsis thaliana (Mouse-ear cress).